The following is a 79-amino-acid chain: Hematopoietic cell signal transducer (79 aa).

The signal sequence occupies residues 1–18 (MAPPGGILFLLLLPVAAA). Residues 19–35 (QVTSGSCSGCGPLSLPL) are Extracellular-facing. Residues 36-56 (LAGLVAADAVVSLLIVVGVFV) traverse the membrane as a helical segment. The Cytoplasmic portion of the chain corresponds to 57-79 (CGRPRSRPTQEDGKIYINMPGRG). The residue at position 72 (Tyr-72) is a Phosphotyrosine. The tract at residues 72–74 (YIN) is GRB2 binding site. The segment at 72–75 (YINM) is PIK3R1 binding site.

This sequence belongs to the DAP10 family. In terms of assembly, homodimer; Disulfide-linked. Heterohexamer composed of four subunits of HCST/DAP10 and two subunits of KLRK1. Interacts (via transmembrane domain) with KLRK1 (via transmembrane domain); the interaction is required for KLRK1 NK cell surface and induces NK cell-mediated cytotoxicity. Interacts with PIK3R1 and GRB2. Interacts with CLEC5A. Forms an CLEC5A/TYROBP/HCST trimolecular complex depending almost solely on TYROBP. Interacts with KLRK1. Interacts with CD300H. In terms of processing, phosphorylated; PIK3R1 and GRB2 associate specifically with tyrosine-phosphorylated HCST. Post-translationally, O-glycosylated. As to expression, expressed predominantly in lymphohematopoietic tissues.

It localises to the membrane. In terms of biological role, transmembrane adapter protein which associates with KLRK1 to form an activation receptor KLRK1-HCST in lymphoid and myeloid cells; this receptor plays a major role in triggering cytotoxicity against target cells expressing cell surface ligands such as MHC class I chain-related MICA and MICB, and UL16-binding proteins (ULBPs); these ligands are up-regulated by stress conditions and pathological state such as viral infection and tumor transformation. Functions as a docking site for PI3-kinase PIK3R1 and GRB2. Interaction of ULBPs with KLRK1-HCST triggers calcium mobilization and activation of the PIK3R1, MAP2K/ERK, and JAK2/STAT5 signaling pathways. Both PIK3R1 and GRB2 are required for full KLRK1-HCST-mediated activation and ultimate killing of target cells. In NK cells, KLRK1-HCST signaling directly induces cytotoxicity and enhances cytokine production initiated via DAP12/TYROBP-associated receptors. In T-cells, it provides primarily costimulation for TCR-induced signals. KLRK1-HCST receptor plays a role in immune surveillance against tumors and is required for cytolysis of tumors cells; indeed, melanoma cells that do not express KLRK1 ligands escape from immune surveillance mediated by NK cells. This Sus scrofa (Pig) protein is Hematopoietic cell signal transducer (HCST).